The following is a 940-amino-acid chain: Glutamate receptor 2.9 (940 aa).

Positions 1–23 (MKTNNTFLSYFVCGFLLMGVGLG) are cleaved as a signal peptide. The Extracellular segment spans residues 24 to 566 (QNQTSEIKVG…DTWVFLEPWS (543 aa)). 6 N-linked (GlcNAc...) asparagine glycosylation sites follow: N25, N39, N115, N338, N345, and N528. The helical transmembrane segment at 567-587 (LELWVTTGCFFVFIGFVVWLF) threads the bilayer. Residues 588 to 596 (EHRVNTDFR) lie on the Cytoplasmic side of the membrane. A helical membrane pass occupies residues 597-617 (GPPQYQIGTSLWFSFSTMVFA). The Cytoplasmic segment spans residues 618-628 (HRENVVSNLAR). A helical transmembrane segment spans residues 629–649 (FVVVVWCFVVLVLTQSYTASL). At 650 to 811 (TSFLTVQSLQ…NRLNLSSFLG (162 aa)) the chain is on the extracellular side. Residues N771, N776, and N805 are each glycosylated (N-linked (GlcNAc...) asparagine). Residues 812-832 (LFLIAGTAISFSLLVFVALFL) form a helical membrane-spanning segment. Over 833–940 (YEHRHTLGDD…ESDIECRVEQ (108 aa)) the chain is Cytoplasmic. Disordered stretches follow at residues 876 to 900 (ISSP…QSPS) and 914 to 940 (PSEE…RVEQ).

It belongs to the glutamate-gated ion channel (TC 1.A.10.1) family. As to quaternary structure, may form heteromers. In terms of tissue distribution, expressed predominantly in roots.

The protein resides in the membrane. In terms of biological role, glutamate-gated receptor that probably acts as a non-selective cation channel. May be involved in light-signal transduction and calcium homeostasis via the regulation of calcium influx into cells. The chain is Glutamate receptor 2.9 (GLR2.9) from Arabidopsis thaliana (Mouse-ear cress).